A 94-amino-acid polypeptide reads, in one-letter code: PqqA binding protein (94 aa).

Belongs to the PqqD family. As to quaternary structure, monomer. Interacts with PqqE.

The protein operates within cofactor biosynthesis; pyrroloquinoline quinone biosynthesis. In terms of biological role, functions as a PqqA binding protein and presents PqqA to PqqE, in the pyrroloquinoline quinone (PQQ) biosynthetic pathway. The protein is PqqA binding protein of Pseudomonas savastanoi pv. phaseolicola (strain 1448A / Race 6) (Pseudomonas syringae pv. phaseolicola (strain 1448A / Race 6)).